We begin with the raw amino-acid sequence, 216 residues long: Endoplasmic reticulum vesicle protein 25 (216 aa).

An N-terminal signal peptide occupies residues 1 to 21 (MMVSLKSSLFFMLALLTVVHA). The Lumenal portion of the chain corresponds to 22–184 (LNFDIPAKTN…TNESTNERVK (163 aa)). The GOLD domain maps to 34 to 150 (PFCLREYVGE…LEPVEADIRR (117 aa)). Residues 185-205 (NFAYLTFISLFVLVIWQILYL) form a helical membrane-spanning segment. The Cytoplasmic segment spans residues 206-216 (RSFFQRKHLIP).

It belongs to the EMP24/GP25L family.

It localises to the endoplasmic reticulum membrane. The protein localises to the golgi apparatus membrane. In terms of biological role, constituent of COPII-coated endoplasmic reticulum-derived transport vesicles. Required for efficient transport of a subset of secretory proteins to the Golgi. Facilitates retrograde transport from the Golgi to the endoplasmic reticulum. The polypeptide is Endoplasmic reticulum vesicle protein 25 (erv25) (Schizosaccharomyces pombe (strain 972 / ATCC 24843) (Fission yeast)).